A 1414-amino-acid chain; its full sequence is DNA-directed RNA polymerase subunit beta' (1414 aa).

The Zn(2+) site is built by Cys70, Cys72, Cys85, and Cys88. Mg(2+) is bound by residues Asp460, Asp462, and Asp464. The Zn(2+) site is built by Cys814, Cys888, Cys895, and Cys898. The tract at residues 1378 to 1414 (EREAARQLANPFEDAPVTVGGEPEAPAADTPSDDSAE) is disordered.

It belongs to the RNA polymerase beta' chain family. The RNAP catalytic core consists of 2 alpha, 1 beta, 1 beta' and 1 omega subunit. When a sigma factor is associated with the core the holoenzyme is formed, which can initiate transcription. It depends on Mg(2+) as a cofactor. The cofactor is Zn(2+).

The enzyme catalyses RNA(n) + a ribonucleoside 5'-triphosphate = RNA(n+1) + diphosphate. Its function is as follows. DNA-dependent RNA polymerase catalyzes the transcription of DNA into RNA using the four ribonucleoside triphosphates as substrates. The chain is DNA-directed RNA polymerase subunit beta' from Bordetella bronchiseptica (strain ATCC BAA-588 / NCTC 13252 / RB50) (Alcaligenes bronchisepticus).